Consider the following 511-residue polypeptide: Histidine ammonia-lyase (511 aa).

Residues Ala142–Gly144 constitute a cross-link (5-imidazolinone (Ala-Gly)). Ser143 is modified (2,3-didehydroalanine (Ser)).

Belongs to the PAL/histidase family. Post-translationally, contains an active site 4-methylidene-imidazol-5-one (MIO), which is formed autocatalytically by cyclization and dehydration of residues Ala-Ser-Gly.

The protein resides in the cytoplasm. It carries out the reaction L-histidine = trans-urocanate + NH4(+). It functions in the pathway amino-acid degradation; L-histidine degradation into L-glutamate; N-formimidoyl-L-glutamate from L-histidine: step 1/3. This chain is Histidine ammonia-lyase (hutH), found in Rhizobium meliloti (strain 1021) (Ensifer meliloti).